The chain runs to 1486 residues: Chromosome partition protein MukB (1486 aa).

34–41 (GGNGAGKS) is a binding site for ATP. 3 coiled-coil regions span residues 326-418 (LEAD…QYNQ), 444-480 (LETF…QAYQ), and 509-603 (RHLA…RAPV). Residues 666–783 (PGGSEDQRLN…EVPLFGRAAR (118 aa)) form a flexible hinge region. 3 coiled-coil regions span residues 835–923 (EAEI…AKLE), 977–1115 (EMLS…TAKA), and 1209–1266 (VEAI…QNVS).

Belongs to the SMC family. MukB subfamily. Homodimerization via its hinge domain. Binds to DNA via its C-terminal region. Interacts, and probably forms a ternary complex, with MukE and MukF via its C-terminal region. The complex formation is stimulated by calcium or magnesium. Interacts with tubulin-related protein FtsZ.

The protein localises to the cytoplasm. Its subcellular location is the nucleoid. Its function is as follows. Plays a central role in chromosome condensation, segregation and cell cycle progression. Functions as a homodimer, which is essential for chromosome partition. Involved in negative DNA supercoiling in vivo, and by this means organize and compact chromosomes. May achieve or facilitate chromosome segregation by condensation DNA from both sides of a centrally located replisome during cell division. The sequence is that of Chromosome partition protein MukB from Escherichia coli (strain ATCC 8739 / DSM 1576 / NBRC 3972 / NCIMB 8545 / WDCM 00012 / Crooks).